A 220-amino-acid chain; its full sequence is Glycerol-3-phosphate acyltransferase (220 aa).

Helical transmembrane passes span 11-31 (INVI…GYAL), 70-90 (LLVL…SKLF), 96-116 (LQWM…FLNF), 127-147 (GSVV…WFFV), 153-173 (ISSL…FFVP), and 192-212 (PMVL…FNLL).

It belongs to the PlsY family. In terms of assembly, probably interacts with PlsX.

It localises to the cell inner membrane. The catalysed reaction is an acyl phosphate + sn-glycerol 3-phosphate = a 1-acyl-sn-glycero-3-phosphate + phosphate. It participates in lipid metabolism; phospholipid metabolism. Catalyzes the transfer of an acyl group from acyl-phosphate (acyl-PO(4)) to glycerol-3-phosphate (G3P) to form lysophosphatidic acid (LPA). This enzyme utilizes acyl-phosphate as fatty acyl donor, but not acyl-CoA or acyl-ACP. The chain is Glycerol-3-phosphate acyltransferase from Helicobacter pylori (strain J99 / ATCC 700824) (Campylobacter pylori J99).